Consider the following 209-residue polypeptide: Glutathione S-transferase (209 aa).

Residues 7–91 (FFFFFFFFFS…YLSKKYNISG (85 aa)) enclose the GST N-terminal domain. Glutathione contacts are provided by residues 62–63 (QV), 75–76 (QS), Asp-109, Lys-121, and Thr-125. Residues 93–209 (GELNEFYADM…YIANRKESVY (117 aa)) enclose the GST C-terminal domain.

It belongs to the GST superfamily. Homodimer. In the absence of ligands two homodimers may interact to form a tetramer.

It carries out the reaction RX + glutathione = an S-substituted glutathione + a halide anion + H(+). In terms of biological role, conjugation of reduced glutathione to a wide number of exogenous and endogenous hydrophobic electrophiles. May also function as a storage protein or ligandin for parasitotoxic ferriprotoporphyrin IX (hemin). The chain is Glutathione S-transferase from Plasmodium yoelii yoelii.